A 432-amino-acid chain; its full sequence is Probable exopolygalacturonase X (432 aa).

A signal peptide spans 1-23; sequence MKFSYSFVQVVSLLLSLSPSVEG. Residues N113, N129, and N199 are each glycosylated (N-linked (GlcNAc...) asparagine). Residues 231-252 form a PbH1 1 repeat; sequence SDNIVIQNSVINNGDDCVSFKP. D245 functions as the Proton donor in the catalytic mechanism. C247 and C264 are joined by a disulfide. N-linked (GlcNAc...) asparagine glycosylation is found at N253 and N265. PbH1 repeat units lie at residues 254-274, 285-306, and 327-348; these read STNI…SVGS, VQNV…RIKV, and VKNI…EVTQ. H268 is a catalytic residue. Residues N292, N297, N329, N354, and N364 are each glycosylated (N-linked (GlcNAc...) asparagine). One copy of the PbH1 5 repeat lies at 362-394; the sequence is PSNLTISDIHFKNFRGTTSGKRDPDVGTIVCSS. A disulfide bridge links C392 with C398.

It belongs to the glycosyl hydrolase 28 family.

Its subcellular location is the secreted. The enzyme catalyses [(1-&gt;4)-alpha-D-galacturonosyl](n) + H2O = alpha-D-galacturonate + [(1-&gt;4)-alpha-D-galacturonosyl](n-1). Specific in hydrolyzing the terminal glycosidic bond of polygalacturonic acid and oligogalacturonates. The chain is Probable exopolygalacturonase X (pgaX) from Neosartorya fischeri (strain ATCC 1020 / DSM 3700 / CBS 544.65 / FGSC A1164 / JCM 1740 / NRRL 181 / WB 181) (Aspergillus fischerianus).